The primary structure comprises 1980 residues: Unconventional myosin-IXb (1980 aa).

Position 2 is an N-acetylserine (Ser2). The Ras-associating domain occupies 15-114 (ATFHLHIYPQ…YYFLLQERNA (100 aa)). Residues 146–954 (ADFDDLCNLP…ERQALQERLH (809 aa)) enclose the Myosin motor domain. An ATP-binding site is contributed by 239 to 246 (GESGSGKT). The disordered stretch occupies residues 715 to 736 (GVSSPVTRSHVEELPRGANTPS). Ser717 and Ser718 each carry phosphoserine. The interval 845-856 (KAEPFFIRCIRS) is actin-binding. Residues 941–1045 (LKETERQALQ…CRGHLQRRSF (105 aa)) are neck or regulatory domain. IQ domains are found at residues 958–978 (LRRILLLQSWFRMVLERRHFV), 981–1001 (KHAALTIQACWRSYRVRRTLE), 1002–1024 (RTRAAVYLQAAWRGYLQRQAYHH), and 1025–1054 (QRHSIIRLQSLCRGHLQRRSFSQMMLEKQK). Residue Ser1046 is modified to Phosphoserine. The tail stretch occupies residues 1046-1980 (SQMMLEKQKA…ERAVRGAAEE (935 aa)). 3 disordered regions span residues 1049–1281 (MLEK…HPDT), 1302–1380 (SQSL…QGDS), and 1394–1449 (DKKP…NRKV). The span at 1097 to 1106 (TWMNSKSPNG) shows a compositional bias: polar residues. Ser1108, Ser1115, and Ser1177 each carry phosphoserine. Composition is skewed to basic and acidic residues over residues 1129-1177 (ESHE…RKAS) and 1186-1195 (EDTKEPREDG). Ser1220, Ser1222, Ser1229, Ser1237, Ser1243, and Ser1247 each carry phosphoserine. A compositionally biased stretch (low complexity) spans 1235-1247 (RVSPVLPSSSLES). Residues 1250-1265 (DEDKGENSTKVQDKPE) are compositionally biased toward basic and acidic residues. Phosphoserine occurs at positions 1266, 1268, and 1304. At Thr1319 the chain carries Phosphothreonine. Phosphoserine is present on residues Ser1327, Ser1329, and Ser1337. Over residues 1327–1344 (SFSTSDVSKLSPVKTSTE) the composition is skewed to polar residues. The segment at 1592-1641 (GHVFASYQVNIPQSCEQCLSYIWLMDKALLCSVCKMTCHKKCVHKIQSYC) adopts a Phorbol-ester/DAG-type zinc-finger fold. Ser1649 is modified (phosphoserine). A Rho-GAP domain is found at 1663–1848 (DSLTSDKASV…MLIKEQMRKY (186 aa)). Positions 1699–1704 (AANRTR) are interaction with RHOA. Positions 1841 to 1861 (IKEQMRKYKVKMEEINHLEAA) form a coiled coil. A Phosphoserine modification is found at Ser1886. Residues 1891 to 1923 (VRTKSPRTPVVQDLEELGALPEEAAGGDEDREK) form a disordered region. Residues 1918–1948 (DEDREKEILMERIQSIKEEKEDITYRLPELD) are a coiled coil. Residues Ser1932, Ser1952, and Ser1959 each carry the phosphoserine modification. Basic and acidic residues predominate over residues 1937-1953 (KEDITYRLPELDPRGSD). The segment at 1937–1980 (KEDITYRLPELDPRGSDEENLDSETSASTESLLEERAVRGAAEE) is disordered. Thr1965 is modified (phosphothreonine). Over residues 1969–1980 (LEERAVRGAAEE) the composition is skewed to basic and acidic residues.

It belongs to the TRAFAC class myosin-kinesin ATPase superfamily. Myosin family. As to quaternary structure, interacts (via IQ domains) with CALM. Interacts with RHOA. Interacts (via Rho-GAP domain) with ROBO1; this inhibits the interaction with RHOA and the stimulation of RHOA GTPase activity, and thereby increases the levels of active RHOA. Expressed in testis, lung, thymus, brain, liver, spleen and heart muscle. Detected in lung, testis, spleen and liver, and at reduced level in different brain regions (at protein level).

It is found in the cytoplasm. The protein resides in the cell cortex. Its subcellular location is the perinuclear region. The protein localises to the cytoskeleton. In terms of biological role, myosins are actin-based motor molecules with ATPase activity. Unconventional myosins serve in intracellular movements. Binds actin with high affinity both in the absence and presence of ATP and its mechanochemical activity is inhibited by calcium ions. Also acts as a GTPase activator for RHOA. Plays a role in the regulation of cell migration via its role as RHOA GTPase activator. This is regulated by its interaction with the SLIT2 receptor ROBO1; interaction with ROBO1 impairs interaction with RHOA and subsequent activation of RHOA GTPase activity, and thereby leads to increased levels of active, GTP-bound RHOA. This is Unconventional myosin-IXb (Myo9b) from Rattus norvegicus (Rat).